A 3289-amino-acid chain; its full sequence is tRNA nuclease CdiA (3289 aa).

The signal sequence occupies residues 1 to 32; sequence MHQPPVRFTYRLLSYLISTIIAGQPLLPAVGA. The tract at residues 36-322 is two-partner system transport domain (TPS); the sequence is PQNGAGMDKA…AGGNLSVSSR (287 aa). Residues 351-1398 are FHA-1; sequence EKLTAGRDVT…IVVRTGHLLN (1048 aa). The interval 595–615 is disordered; that stretch reads AVNASEKLTHSGKSSAPSLSL. Positions 1399–1689 are receptor binding domain (RBD); it reads QREGFSATTT…LTGQTGISDD (291 aa). The interval 1690–1874 is YP domain; the sequence is WPLPSGNNGY…LSPEDITLHN (185 aa). Residues 1875–1935 are periplasmic FHA-1 repeat (pFR); it reads GSVISGNNVQ…DLSAIGDISN (61 aa). Residues 1979–2653 are FHA-2; that stretch reads TDTGPVATIK…TSKYDSKQTS (675 aa). Residues 2097 to 2113 are compositionally biased toward basic and acidic residues; the sequence is RESKNSRNGRSESHESH. Disordered stretches follow at residues 2097–2116, 2332–2356, and 2466–2513; these read RESK…HAAV, GSSK…TIGS, and TGDP…TGKN. Composition is skewed to polar residues over residues 2344–2356 and 2472–2507; these read GTTQ…TIGS and TGVS…NLSV. A pretoxin (PT) domain region spans residues 2992-3034; it reads SDLSEEQKQTISTLATVSAGLAGGLTGNSTASAAVGAQSGKNA. The short motif at 3035–3038 is the VENN CT cleavage motif element; sequence VENN. The C-terminal effector domain (CT); has tRNase activity stretch occupies residues 3035–3289; sequence VENNYLSVSE…VGHIQPVKVK (255 aa). Positions 3039–3197 are inner membrane translocation domain (IMTD), targets protein to PtsG; it reads YLSVSEKTEL…PLIGQAASNK (159 aa).

This sequence in the N-terminal section; belongs to the CdiA toxin family. As to quaternary structure, forms a contact-dependent growth inhibition complex of CdiA-CT-NC101, CdiI-NC101 and EF-Tu; the complex is a dimer of heterotrimers. Stable CdiA-CT-NC101, EF-Tu complexes are not detected, nor are complexes with EF-Ts.

It is found in the secreted. It localises to the target cell. The protein resides in the target cell cytoplasm. Toxic component of a toxin-immunity protein module, which functions as a cellular contact-dependent growth inhibition (CDI) system. CDI modules allow bacteria to communicate with and inhibit the growth of closely related neighboring bacteria in a contact-dependent fashion (target cell counts decrease about 10,0000-fold for this system). CdiA toxicity is neutralized by its cognate immunity protein CdiI-NC101, but not by CdiI from other bacteria. The C-terminal domain (CT) cleaves tRNA endonucleolytically at the 5' side of guanine discriminator nucleotide sites (removes the last 4 nucleotides of the tRNA acceptor arm when the first nucleotide to be removed is G). Requires EF-Ts (tsf) for toxic function of the CT domain in vivo. In vitro the CT tRNase activity requires both EF-Tu (tufA) and EF-Ts. EF-Ts probably increases steady-state GTP-EF-Tu-aa-tRNA substrate levels. The CT domain is thought to remodel this same complex to displace the 3'-end of the aa-tRNA and allow it to enter into the toxin active site. The CT domain gains access to the cytoplasm of target cells by using integral inner membrane protein PTS system glucose-specific EIICB component (ptsG). Its function is as follows. The CdiA protein is thought to be exported from the cell through the central lumen of CdiB, the other half of its two-partner system (TPS). The TPS domain probably remains associated with CdiB while the FHA-1 domain forms an extended filament with the receptor-binding domain (RBD) at its extremity; in the secretion arrested state the C-terminus of the RBD and YP domains form a hairpin-like structure as the FHA-2, PT and CT domains are periplasmic. The YP domain is probably responsible for this arrest at the point where it re-enters the host cell periplasm. Upon binding to a target cell outer membrane receptor a signal is transmitted to activate secretion. The filament elongates slightly, the rest of CdiA is secreted and the FHA-2 domain becomes stably associated with the target cell's outer membrane where it facilitates entry of the toxic CT domain into the target cell periplasm. From there the toxic CT domain is cleaved and gains access to the target cell cytoplasm via an inner membrane protein (PtsG for this CDI). The protein is tRNA nuclease CdiA of Escherichia coli (strain NC101).